Consider the following 228-residue polypeptide: Death domain-containing membrane protein NRADD (228 aa).

The Extracellular portion of the chain corresponds to 1 to 52 (MLHNVSKGVVYSDTALKGQDGDREGMWVGAGGALAPNTSSLFPPEPPGASSN). N-linked (GlcNAc...) asparagine glycans are attached at residues Asn4 and Asn37. The chain crosses the membrane as a helical; Signal-anchor for type III membrane protein span at residues 53–73 (IIPVYCALLATVVLGLLAYVA). Topologically, residues 74-228 (FKCWRSRKQR…SSPAEGCSVV (155 aa)) are cytoplasmic. The 80-residue stretch at 143-222 (EEVQRLLILG…DVVQVLSSPA (80 aa)) folds into the Death domain.

Interacts with NTRK1. Isoform 1 and isoform 2 interact with NGFR. Interacts with SORT1. Post-translationally, isoform 1 is N-glycosylated. Isoform 2 is not N-glycosylated. As to expression, detected in embryo, including embryonic brain. Detected at very low levels in adult testis, spleen, thymus and lung.

The protein localises to the cell membrane. It is found in the nucleus. Its function is as follows. Modulates NTRK1 signaling. Can activate several intracellular signaling pathways, leading to activation of JUN. Promotes translocation of SORT1 to the cell membrane, and thereby hinders lysosomal degradation of SOTR1 and promotes its interaction with NGFR. Both isoform 1 and isoform 2 promote apoptosis. This Rattus norvegicus (Rat) protein is Death domain-containing membrane protein NRADD (Nradd).